The primary structure comprises 323 residues: Beta-ketoacyl-[acyl-carrier-protein] synthase III (323 aa).

Active-site residues include cysteine 113 and histidine 250. The tract at residues 251 to 255 (QANRR) is ACP-binding. Residue asparagine 280 is part of the active site.

This sequence belongs to the thiolase-like superfamily. FabH family. Homodimer.

It is found in the cytoplasm. The enzyme catalyses malonyl-[ACP] + acetyl-CoA + H(+) = 3-oxobutanoyl-[ACP] + CO2 + CoA. It functions in the pathway lipid metabolism; fatty acid biosynthesis. In terms of biological role, catalyzes the condensation reaction of fatty acid synthesis by the addition to an acyl acceptor of two carbons from malonyl-ACP. Catalyzes the first condensation reaction which initiates fatty acid synthesis and may therefore play a role in governing the total rate of fatty acid production. Possesses both acetoacetyl-ACP synthase and acetyl transacylase activities. Its substrate specificity determines the biosynthesis of branched-chain and/or straight-chain of fatty acids. This chain is Beta-ketoacyl-[acyl-carrier-protein] synthase III, found in Rhizobium johnstonii (strain DSM 114642 / LMG 32736 / 3841) (Rhizobium leguminosarum bv. viciae).